A 379-amino-acid polypeptide reads, in one-letter code: Sensor histidine kinase YhcY (379 aa).

The 189-residue stretch at 185-373 (RLAQELHDSV…KLSIRLPLKS (189 aa)) folds into the Histidine kinase domain. Position 191 is a phosphohistidine; by autocatalysis (His191).

It carries out the reaction ATP + protein L-histidine = ADP + protein N-phospho-L-histidine.. Its function is as follows. Member of the two-component regulatory system YhcY/YhcZ. Probably activates YhcZ by phosphorylation. In Bacillus subtilis (strain 168), this protein is Sensor histidine kinase YhcY (yhcY).